The primary structure comprises 244 residues: 5-oxoprolinase subunit A (244 aa).

The protein belongs to the LamB/PxpA family. As to quaternary structure, forms a complex composed of PxpA, PxpB and PxpC.

The enzyme catalyses 5-oxo-L-proline + ATP + 2 H2O = L-glutamate + ADP + phosphate + H(+). Its function is as follows. Catalyzes the cleavage of 5-oxoproline to form L-glutamate coupled to the hydrolysis of ATP to ADP and inorganic phosphate. The polypeptide is 5-oxoprolinase subunit A (Salmonella dublin (strain CT_02021853)).